A 510-amino-acid polypeptide reads, in one-letter code: Bifunctional purine biosynthesis protein PurH (510 aa).

In terms of domain architecture, MGS-like spans 1–145 (MSKRALISVS…KNFEDVLVVT (145 aa)).

Belongs to the PurH family.

The enzyme catalyses (6R)-10-formyltetrahydrofolate + 5-amino-1-(5-phospho-beta-D-ribosyl)imidazole-4-carboxamide = 5-formamido-1-(5-phospho-D-ribosyl)imidazole-4-carboxamide + (6S)-5,6,7,8-tetrahydrofolate. The catalysed reaction is IMP + H2O = 5-formamido-1-(5-phospho-D-ribosyl)imidazole-4-carboxamide. It functions in the pathway purine metabolism; IMP biosynthesis via de novo pathway; 5-formamido-1-(5-phospho-D-ribosyl)imidazole-4-carboxamide from 5-amino-1-(5-phospho-D-ribosyl)imidazole-4-carboxamide (10-formyl THF route): step 1/1. It participates in purine metabolism; IMP biosynthesis via de novo pathway; IMP from 5-formamido-1-(5-phospho-D-ribosyl)imidazole-4-carboxamide: step 1/1. The polypeptide is Bifunctional purine biosynthesis protein PurH (Oceanobacillus iheyensis (strain DSM 14371 / CIP 107618 / JCM 11309 / KCTC 3954 / HTE831)).